Here is a 317-residue protein sequence, read N- to C-terminus: Mitochondrial thiamine pyrophosphate carrier 1 (317 aa).

Solcar repeat units follow at residues 12–110 (GTRR…TTQV), 120–206 (PPAL…LRPV), and 214–309 (PFGS…SLKL). Transmembrane regions (helical) follow at residues 17 to 35 (VVLS…VAPL), 91 to 107 (LMYV…YRTT), 126 to 146 (FVSG…LDLL), 181 to 198 (GCSA…LFFA), 220 to 240 (AAAG…LDLV), and 284 to 301 (GLTV…ITMW).

It belongs to the mitochondrial carrier (TC 2.A.29) family.

It localises to the mitochondrion inner membrane. In terms of biological role, mitochondrial transporter that mediates uptake of thiamine pyrophosphate (ThPP) into mitochondria. This is Mitochondrial thiamine pyrophosphate carrier 1 (tpc1) from Neosartorya fischeri (strain ATCC 1020 / DSM 3700 / CBS 544.65 / FGSC A1164 / JCM 1740 / NRRL 181 / WB 181) (Aspergillus fischerianus).